Here is a 308-residue protein sequence, read N- to C-terminus: UDP-N-acetylenolpyruvoylglucosamine reductase (308 aa).

The region spanning 35–200 is the FAD-binding PCMH-type domain; sequence RVGGPAQVLF…TSARFRGEPM (166 aa). Arginine 180 is an active-site residue. Over residues 211-226 the composition is skewed to basic and acidic residues; the sequence is EVQRHRETAQPVREKT. The tract at residues 211-236 is disordered; the sequence is EVQRHRETAQPVREKTGGSTFKNPPG. The active-site Proton donor is the serine 229. Glutamate 299 is a catalytic residue.

Belongs to the MurB family. FAD is required as a cofactor.

It is found in the cytoplasm. The catalysed reaction is UDP-N-acetyl-alpha-D-muramate + NADP(+) = UDP-N-acetyl-3-O-(1-carboxyvinyl)-alpha-D-glucosamine + NADPH + H(+). Its pathway is cell wall biogenesis; peptidoglycan biosynthesis. Cell wall formation. In Rhodopseudomonas palustris (strain BisB18), this protein is UDP-N-acetylenolpyruvoylglucosamine reductase.